A 509-amino-acid polypeptide reads, in one-letter code: MILPWLILIPFIGGFLCWIAEHSSKTLPRWIALLSMTLVLILSLWIWATGDFQLAPAPGGEPEWTLQFKVLWIERLGISIHLAMDGLSLLMVALTGLLGVLSVLCSWNEIQRRIGFFHLNLLWILGGVIGVFLAIDLFLFFFFWEMMLVPMYFLIALWGHSSDDGKKTRIYAATKFFIFTQASGLVMLVAILGLVFVNFNATGVITFDYATLLKTQLSPHVEWLLMLGFFVAFAVKMPVVPVHSWLPDAHAQAPTAGSVDLAGILLKTAAYGLIRFALPLFPNASAEFAPIAMWLGIIGIFYGALLSFAQTDIKRLVAYSSVSHMGFVMIGIYSGSQVALQGVVVQMIAHGLSAAALFILCGQLYERLHTRDMRKMGGLWSRMPYLPAISLFFASASLGLPGTGNFVGEFLILIGAFKVVPVIIVIATFGLVFASVYSLIMIHRAYFGPSQSDEPILGLDARELSMVLGLAVLLVLLGVYPQPVLDISAASMHGVQQWLGAALSTLAGR.

A run of 13 helical transmembrane segments spans residues 1–21, 30–50, 87–107, 123–143, 176–196, 223–243, 261–281, 288–308, 316–336, 342–362, 376–396, 422–442, and 467–487; these read MILP…WIAE, WIAL…WATG, LSLL…LCSW, WILG…FFFF, FFIF…GLVF, WLLM…VPVH, LAGI…LPLF, FAPI…LLSF, LVAY…YSGS, GVVV…ILCG, MGGL…FASA, VIIV…LIMI, and VLGL…VLDI.

Belongs to the complex I subunit 4 family. Composed of 13 different subunits. Subunits NuoA, H, J, K, L, M, N constitute the membrane sector of the complex.

The protein localises to the cell inner membrane. It catalyses the reaction a quinone + NADH + 5 H(+)(in) = a quinol + NAD(+) + 4 H(+)(out). Its function is as follows. NDH-1 shuttles electrons from NADH, via FMN and iron-sulfur (Fe-S) centers, to quinones in the respiratory chain. The immediate electron acceptor for the enzyme in this species is believed to be ubiquinone. Couples the redox reaction to proton translocation (for every two electrons transferred, four hydrogen ions are translocated across the cytoplasmic membrane), and thus conserves the redox energy in a proton gradient. This chain is NADH-quinone oxidoreductase subunit M (nuoM), found in Pseudomonas aeruginosa (strain ATCC 15692 / DSM 22644 / CIP 104116 / JCM 14847 / LMG 12228 / 1C / PRS 101 / PAO1).